Reading from the N-terminus, the 208-residue chain is Methylthioribulose-1-phosphate dehydratase (208 aa).

Residues His99 and His101 each coordinate Zn(2+).

The protein belongs to the aldolase class II family. MtnB subfamily. Zn(2+) is required as a cofactor.

It catalyses the reaction 5-(methylsulfanyl)-D-ribulose 1-phosphate = 5-methylsulfanyl-2,3-dioxopentyl phosphate + H2O. It participates in amino-acid biosynthesis; L-methionine biosynthesis via salvage pathway; L-methionine from S-methyl-5-thio-alpha-D-ribose 1-phosphate: step 2/6. Its function is as follows. Catalyzes the dehydration of methylthioribulose-1-phosphate (MTRu-1-P) into 2,3-diketo-5-methylthiopentyl-1-phosphate (DK-MTP-1-P). The sequence is that of Methylthioribulose-1-phosphate dehydratase from Aquifex aeolicus (strain VF5).